Here is a 133-residue protein sequence, read N- to C-terminus: Homeobox protein BarH-like 2 (133 aa).

Residues 1-46 (ELEKEFQKQKYLSTPDRLDLAQSLGLTQLQVKTWYQNRRMKWKKMV) constitute a DNA-binding region (homeobox). Positions 45 to 133 (MVLKGGQEAP…VTSPEPPPSS (89 aa)) are disordered.

It belongs to the BAR homeobox family. In terms of tissue distribution, expressed in keratinizing epithelia such as wool follicle, tongue and esophagus. Expressed at low level in thymus. Not detected in spleen, skeletal muscle, brain, heart kidney, liver and lung.

It is found in the nucleus. Transcription factor. Binds optimally to the DNA consensus sequence 5'-YYTAATGRTTTTY-3'. May control the expression of neural adhesion molecules such as L1 or Ng-CAM during embryonic development of both the central and peripherical nervous system. May be involved in controlling adhesive processes in keratinizing epithelia. The sequence is that of Homeobox protein BarH-like 2 (BARX2) from Ovis aries (Sheep).